The sequence spans 645 residues: Chaperone protein DnaK (645 aa).

Threonine 199 bears the Phosphothreonine; by autocatalysis mark. Disordered regions lie at residues 509-530 and 615-645; these read GALSDSDIEQMQKDAEANAEED and EAGADAAGAAGATAGGGDDDDAIDAEFEVKE. Basic and acidic residues predominate over residues 518–530; it reads QMQKDAEANAEED. Residues 615 to 626 are compositionally biased toward low complexity; the sequence is EAGADAAGAAGA. A compositionally biased stretch (acidic residues) spans 631–645; it reads GDDDDAIDAEFEVKE.

It belongs to the heat shock protein 70 family.

Acts as a chaperone. The sequence is that of Chaperone protein DnaK from Rhodopirellula baltica (strain DSM 10527 / NCIMB 13988 / SH1).